The chain runs to 339 residues: DNA-directed RNA polymerase subunit alpha (339 aa).

The interval 1–233 (MVREEITGST…DLFLPFIHTE (233 aa)) is alpha N-terminal domain (alpha-NTD). The interval 266–339 (GIPLNCIFID…IDLPKNKFSL (74 aa)) is alpha C-terminal domain (alpha-CTD).

Belongs to the RNA polymerase alpha chain family. In plastids the minimal PEP RNA polymerase catalytic core is composed of four subunits: alpha, beta, beta', and beta''. When a (nuclear-encoded) sigma factor is associated with the core the holoenzyme is formed, which can initiate transcription.

It localises to the plastid. The protein localises to the chloroplast. It carries out the reaction RNA(n) + a ribonucleoside 5'-triphosphate = RNA(n+1) + diphosphate. In terms of biological role, DNA-dependent RNA polymerase catalyzes the transcription of DNA into RNA using the four ribonucleoside triphosphates as substrates. The chain is DNA-directed RNA polymerase subunit alpha from Sorghum bicolor (Sorghum).